The chain runs to 396 residues: MSDTLLNPYFGEFGGMYVPEILVPVLKQLEETFVAAQNDPLFQAEFTDLLKNYAGRPTALTLCRNLTKGSKTKLYLKREDLLHGGAHKTNQVLGQALLAKRMGKTRIIAETGAGQHGVATALACAMLDLPCVIYMGAKDVERQSPNVFRMRLMGAEVIPVQKGSCSLKDACCEAMRDWAANYETTHYLIGTAAGPHPFPTMVREFQKMIGEETKRQILEKENRLPDAVIAAVGGGSNAIGMFAGFIEEKSVQLIGVEPAGKGIETGEHGAPLKHGTTGIYFGMKSPIMQTKDGQIEESYSISAGLDFPSVGPQHAYLNSIGRAEYVSITNQEALDAFQALAQHEGIIPALESSHALAYALKLIAQNPDKEQLLVVNLSGRGDKDIFTVDKILNGGN.

Lys-88 is subject to N6-(pyridoxal phosphate)lysine.

This sequence belongs to the TrpB family. Tetramer of two alpha and two beta chains. It depends on pyridoxal 5'-phosphate as a cofactor.

The catalysed reaction is (1S,2R)-1-C-(indol-3-yl)glycerol 3-phosphate + L-serine = D-glyceraldehyde 3-phosphate + L-tryptophan + H2O. Its pathway is amino-acid biosynthesis; L-tryptophan biosynthesis; L-tryptophan from chorismate: step 5/5. Its function is as follows. The beta subunit is responsible for the synthesis of L-tryptophan from indole and L-serine. This Actinobacillus pleuropneumoniae serotype 3 (strain JL03) protein is Tryptophan synthase beta chain.